The sequence spans 148 residues: Leghemoglobin 2 (148 aa).

The 147-residue stretch at 2 to 148 (GFTEKQEALV…LSAAIKKAMS (147 aa)) folds into the Globin domain. The residue at position 30 (tyrosine 30) is a Nitrated tyrosine. Serine 45 lines the heme b pocket. Residue serine 45 is modified to Phosphoserine. Histidine 63 serves as a coordination point for O2. The heme b site is built by lysine 66, histidine 95, and lysine 98. The residue at position 136 (tyrosine 136) is a Nitrated tyrosine.

It belongs to the plant globin family. As to quaternary structure, monomer. Nitrated in effective nodules and particularly in hypoxic conditions; this mechanism may play a protective role in the symbiosis by buffering toxic peroxynitrite NO(2)(-). Nitration level decrease during nodule senescence. In terms of processing, phosphorylation at Ser-45 disrupts the molecular environment of its porphyrin ring oxygen binding pocket, thus leading to a reduced oxygen consumption and to the delivery of oxygen O(2) to symbiosomes. In terms of tissue distribution, stem nodules.

The protein resides in the cytoplasm. It localises to the cytosol. It is found in the nucleus. Functionally, leghemoglobin that reversibly binds oxygen O(2) through a pentacoordinated heme iron. In stem nodules, facilitates the diffusion of oxygen to the bacteroids while preventing the bacterial nitrogenase from being inactivated by buffering dioxygen, nitric oxide and carbon monoxide, and promoting the formation of reactive oxygen species (ROS, e.g. H(2)O(2)). This role is essential for symbiotic nitrogen fixation (SNF). The polypeptide is Leghemoglobin 2 (Sesbania rostrata).